Reading from the N-terminus, the 248-residue chain is Anamorsin homolog (248 aa).

Residues 4–130 form an N-terminal SAM-like domain region; it reads FKGLQKSLYI…ETGSSARLSF (127 aa). The segment at 131–161 is linker; sequence AKKSPSMNVWKISGDDEELIDEEELLDEEDK. Residues cysteine 172, cysteine 181, cysteine 184, and cysteine 186 each contribute to the [2Fe-2S] cluster site. The interval 172–186 is fe-S binding site A; the sequence is CSTTGKRKACKNCSC. Positions 209, 212, 220, and 223 each coordinate [4Fe-4S] cluster. Short sequence motifs (cx2C motif) lie at residues 209-212 and 220-223; these read CGNC and CSTC. The interval 209–223 is fe-S binding site B; it reads CGNCYLGDAFRCSTC.

Belongs to the anamorsin family. In terms of assembly, monomer. It depends on [2Fe-2S] cluster as a cofactor. [4Fe-4S] cluster serves as cofactor.

Its subcellular location is the cytoplasm. It localises to the mitochondrion intermembrane space. Its function is as follows. Component of the cytosolic iron-sulfur (Fe-S) protein assembly (CIA) machinery. Required for the maturation of extramitochondrial Fe-S proteins. Part of an electron transfer chain functioning in an early step of cytosolic Fe-S biogenesis, facilitating the de novo assembly of a [4Fe-4S] cluster on the cytosolic Fe-S scaffold complex. Electrons are transferred from NADPH via a FAD- and FMN-containing diflavin oxidoreductase. Together with the diflavin oxidoreductase, also required for the assembly of the diferric tyrosyl radical cofactor of ribonucleotide reductase (RNR), probably by providing electrons for reduction during radical cofactor maturation in the catalytic small subunit. This Drosophila mojavensis (Fruit fly) protein is Anamorsin homolog.